A 129-amino-acid polypeptide reads, in one-letter code: Phosphoribosyl-AMP cyclohydrolase (129 aa).

Asp-79 lines the Mg(2+) pocket. Cys-80 lines the Zn(2+) pocket. 2 residues coordinate Mg(2+): Asp-81 and Asp-83. Residues Cys-96 and Cys-103 each coordinate Zn(2+).

The protein belongs to the PRA-CH family. Homodimer. It depends on Mg(2+) as a cofactor. The cofactor is Zn(2+).

It is found in the cytoplasm. It carries out the reaction 1-(5-phospho-beta-D-ribosyl)-5'-AMP + H2O = 1-(5-phospho-beta-D-ribosyl)-5-[(5-phospho-beta-D-ribosylamino)methylideneamino]imidazole-4-carboxamide. It functions in the pathway amino-acid biosynthesis; L-histidine biosynthesis; L-histidine from 5-phospho-alpha-D-ribose 1-diphosphate: step 3/9. In terms of biological role, catalyzes the hydrolysis of the adenine ring of phosphoribosyl-AMP. This chain is Phosphoribosyl-AMP cyclohydrolase, found in Magnetococcus marinus (strain ATCC BAA-1437 / JCM 17883 / MC-1).